Reading from the N-terminus, the 178-residue chain is Cytochrome b6-f complex iron-sulfur subunit (178 aa).

The helical transmembrane segment at 20–42 (LLTFGTATGVALGALYPVANFFM) threads the bilayer. Positions 71 to 161 (NHPAGDRSLV…IDIDDDNVLV (91 aa)) constitute a Rieske domain. 4 residues coordinate [2Fe-2S] cluster: Cys107, His109, Cys125, and His128. A disulfide bridge links Cys112 with Cys127.

The protein belongs to the Rieske iron-sulfur protein family. As to quaternary structure, the 4 large subunits of the cytochrome b6-f complex are cytochrome b6, subunit IV (17 kDa polypeptide, PetD), cytochrome f and the Rieske protein, while the 4 small subunits are PetG, PetL, PetM and PetN. The complex functions as a dimer. Requires [2Fe-2S] cluster as cofactor.

It localises to the cellular thylakoid membrane. It carries out the reaction 2 oxidized [plastocyanin] + a plastoquinol + 2 H(+)(in) = 2 reduced [plastocyanin] + a plastoquinone + 4 H(+)(out). Its function is as follows. Component of the cytochrome b6-f complex, which mediates electron transfer between photosystem II (PSII) and photosystem I (PSI), cyclic electron flow around PSI, and state transitions. This chain is Cytochrome b6-f complex iron-sulfur subunit, found in Prochlorococcus marinus (strain SARG / CCMP1375 / SS120).